The primary structure comprises 366 residues: Histidinol-phosphate aminotransferase (366 aa).

Residue Lys-227 is modified to N6-(pyridoxal phosphate)lysine.

This sequence belongs to the class-II pyridoxal-phosphate-dependent aminotransferase family. Histidinol-phosphate aminotransferase subfamily. Homodimer. The cofactor is pyridoxal 5'-phosphate.

The enzyme catalyses L-histidinol phosphate + 2-oxoglutarate = 3-(imidazol-4-yl)-2-oxopropyl phosphate + L-glutamate. The protein operates within amino-acid biosynthesis; L-histidine biosynthesis; L-histidine from 5-phospho-alpha-D-ribose 1-diphosphate: step 7/9. The protein is Histidinol-phosphate aminotransferase of Campylobacter hominis (strain ATCC BAA-381 / DSM 21671 / CCUG 45161 / LMG 19568 / NCTC 13146 / CH001A).